Consider the following 169-residue polypeptide: MATKVKSQAKLRFVSVEQVQSAIKEIGDLSREHTRLATEMNDKIGATSEHYAPKLKALKEEIEPLQKAVQEYCEANRDELTEFGKTKTANFVTGEVQWRQRPPSVAIRGAEAVMEFLQRMGFDRFIRTRQEINKEALLNEPEVAKGIAGVTIKQGLEDFVIKPFEQDAR.

This sequence to phage Mu protein gam.

Its function is as follows. Protects linear double-stranded DNA of Mu genome from exonuclease degradation. In Haemophilus influenzae (strain ATCC 51907 / DSM 11121 / KW20 / Rd), this protein is Mu-like prophage FluMu host-nuclease inhibitor protein gam.